Reading from the N-terminus, the 182-residue chain is Glycerol-3-phosphate acyltransferase 1 (182 aa).

Transmembrane regions (helical) follow at residues Met-5 to Val-25, Gly-54 to Ala-74, Ser-81 to Phe-101, Ile-117 to Ile-137, and Ile-157 to Leu-177.

Belongs to the PlsY family. As to quaternary structure, probably interacts with PlsX.

It localises to the cell membrane. The enzyme catalyses an acyl phosphate + sn-glycerol 3-phosphate = a 1-acyl-sn-glycero-3-phosphate + phosphate. Its pathway is lipid metabolism; phospholipid metabolism. Functionally, catalyzes the transfer of an acyl group from acyl-phosphate (acyl-PO(4)) to glycerol-3-phosphate (G3P) to form lysophosphatidic acid (LPA). This enzyme utilizes acyl-phosphate as fatty acyl donor, but not acyl-CoA or acyl-ACP. The sequence is that of Glycerol-3-phosphate acyltransferase 1 from Bacillus thuringiensis subsp. konkukian (strain 97-27).